A 180-amino-acid chain; its full sequence is UPF0303 protein PSEEN3311 (180 aa).

This sequence belongs to the UPF0303 family.

This Pseudomonas entomophila (strain L48) protein is UPF0303 protein PSEEN3311.